Consider the following 436-residue polypeptide: Nucleolar protein 4-like (436 aa).

Residues 1–184 (MSDSTWMSAD…KMNDSEGMDP (184 aa)) form a disordered region. Positions 41–61 (SESGSGNGSSTLNPSTSSSTQ) are enriched in low complexity. Serine 130 is modified (phosphoserine). Acidic residues predominate over residues 160-169 (ADDDDDDHDD). Residues 170–184 (HEDNDKMNDSEGMDP) show a composition bias toward basic and acidic residues. A Phosphoserine modification is found at serine 295. Residues 351 to 366 (QPPASLQTGNHSNGPT) are compositionally biased toward polar residues. A disordered region spans residues 351–400 (QPPASLQTGNHSNGPTDLSMKGGASTTSTTPTPTPSSTSTSRPVPTAQLS). The span at 375–396 (STTSTTPTPTPSSTSTSRPVPT) shows a compositional bias: low complexity.

This is Nucleolar protein 4-like (NOL4L) from Pongo abelii (Sumatran orangutan).